Consider the following 405-residue polypeptide: L-carnitine CoA-transferase (405 aa).

CoA is bound by residues Lys97 and Arg104. The active-site Nucleophile is the Asp169.

Belongs to the CoA-transferase III family. CaiB subfamily. In terms of assembly, homodimer.

Its subcellular location is the cytoplasm. The enzyme catalyses crotonobetainyl-CoA + (R)-carnitine = crotonobetaine + (R)-carnitinyl-CoA. It catalyses the reaction 4-(trimethylamino)butanoyl-CoA + (R)-carnitine = (R)-carnitinyl-CoA + 4-(trimethylamino)butanoate. It participates in amine and polyamine metabolism; carnitine metabolism. Catalyzes the reversible transfer of the CoA moiety from gamma-butyrobetainyl-CoA to L-carnitine to generate L-carnitinyl-CoA and gamma-butyrobetaine. Is also able to catalyze the reversible transfer of the CoA moiety from gamma-butyrobetainyl-CoA or L-carnitinyl-CoA to crotonobetaine to generate crotonobetainyl-CoA. The protein is L-carnitine CoA-transferase of Escherichia coli (strain 55989 / EAEC).